A 102-amino-acid chain; its full sequence is Large ribosomal subunit protein bL21 (102 aa).

Belongs to the bacterial ribosomal protein bL21 family. In terms of assembly, part of the 50S ribosomal subunit. Contacts protein L20.

Its function is as follows. This protein binds to 23S rRNA in the presence of protein L20. The chain is Large ribosomal subunit protein bL21 from Shouchella clausii (strain KSM-K16) (Alkalihalobacillus clausii).